We begin with the raw amino-acid sequence, 314 residues long: Formate-nitrite transporter (314 aa).

Topologically, residues 1–47 (MSKGKSKYVIDPISVKTACTSEESYIRCVEYGKGKAHYPNLSLLAKA) are cytoplasmic. Residues 48 to 68 (ILAGVFVGVCAHASGIAGGHF) traverse the membrane as a helical segment. Residues 69-78 (YYHKLREYVG) lie on the Extracellular side of the membrane. A helical transmembrane segment spans residues 79-99 (ISMSAFVYGFTFPIAFLCIIA). The Cytoplasmic segment spans residues 100-128 (TGSDLFTGNTLAVTTALLQRKVSLLQYLR). The helical transmembrane segment at 129 to 149 (VMSISLFGNYLGAVSFAFFVS) threads the bilayer. Over 150 to 185 (HLSGAYEKHTDVTKNHIFQFLNDIAEKKISHTFIQC) the chain is Extracellular. Residues 186-206 (ICLAIGCNIFVCLAVYFVLTI) form a helical membrane-spanning segment. The Cytoplasmic portion of the chain corresponds to 207–211 (KDGSG). Residues 212–232 (MVFSVFFAVYAFAIAGYEHII) form a helical membrane-spanning segment. Residues 233-257 (ANMYTLNLALMVEAKVTWSKVYFHN) lie on the Extracellular side of the membrane. A helical membrane pass occupies residues 258–278 (LLPTLIGNYIAGALVLACPLF). Over 279–314 (YIYRNSYRDYERTRGDGSNCGLRSLSIEMQNGSNGN) the chain is Cytoplasmic.

Belongs to the FNT transporter (TC 1.A.16) family. In terms of assembly, homopentamer.

The protein localises to the cell membrane. It localises to the vacuole membrane. The enzyme catalyses (S)-lactate(in) + H(+)(in) = (S)-lactate(out) + H(+)(out). It catalyses the reaction formate(in) + H(+)(in) = formate(out) + H(+)(out). The catalysed reaction is pyruvate(out) + H(+)(out) = pyruvate(in) + H(+)(in). It carries out the reaction acetate(out) + H(+)(out) = acetate(in) + H(+)(in). Its activity is regulated as follows. Inhibited by the Malaria Box compound MMV007839 and its derivatives BH296 and BH267.meta. Its function is as follows. Monocarboxylate-proton symporter that mediates the efflux of the waste product lactate in the intraerythrocytic parasites; active in acidic-to-neutral pH range. Transports L-lactate. The polypeptide is Formate-nitrite transporter (Plasmodium knowlesi (strain H)).